A 519-amino-acid polypeptide reads, in one-letter code: MTEPLLTMRGIVKAFDGVKALDGIDLTVRPGECVGLCGENGAGKSTLMKVLSGVYPHGTWDGEIRWEGAPLAASGVRDTERAGIVIIHQELMLVPELSVAENIFLGNEITLPGGRMNFAAMVQRAEELLRELRIDTINVAQPVMNYGGGHQQLIEIAKALNKHAKLLILDEPSSSLSASETRILLDIVRDLKRRGVACVYISHKLDEVAAVCDTVTVIRDGRHVATEPMATLTTDRIIAMMVGREIRDLYPREPHEIGDVVLDVRHVTCRDVTNARRKRVDDVSFSVRRGEIVGVAGLVGAGRTELMQAIFGAYPGACTASVTMNGKPLSIRSPADAIRAGIAMVPEDRKRHGIVPQLGVGHNITLAVLRRFAARGRIDAAAELDTIRTEMQRLSVRAAHPFLSIASLSGGNQQKAVLAKMLLTEPQVLILDEPTRGVDVGAKAEIYRLIFALAQRGVALIVVSSELPEVLGLADRVLVIGEGELRGDFVNQGLTQEQILGAALKPARLAAEPTAASAT.

ABC transporter domains are found at residues 6–245 (LTMR…VGRE) and 262–507 (LDVR…LKPA). 38–45 (GENGAGKS) contributes to the ATP binding site.

It belongs to the ABC transporter superfamily. Xylose importer (TC 3.A.1.2.4) family. As to quaternary structure, the complex is composed of two ATP-binding proteins (XylG), two transmembrane proteins (XylH) and a solute-binding protein (XylF).

It localises to the cell inner membrane. The enzyme catalyses D-xylose(out) + ATP + H2O = D-xylose(in) + ADP + phosphate + H(+). In terms of biological role, part of the ABC transporter complex XylFGH involved in xylose import. Responsible for energy coupling to the transport system. The protein is Xylose import ATP-binding protein XylG of Burkholderia cenocepacia (strain HI2424).